The primary structure comprises 142 residues: MQHARKKFRVGRTSAHNRCMLANMLKSLIHQERIETTLPKAKELRRCADKMITLAKKNTLAARRLAVARLMVRYNKLTSKEARQAKAGDLSAYNVDRTVINKLFDQLGTRFVSRNGGYTRILKLQNRVGDNARKCIIEFLAD.

This sequence belongs to the bacterial ribosomal protein bL17 family. Part of the 50S ribosomal subunit. Contacts protein L32.

The protein is Large ribosomal subunit protein bL17 of Chlamydia caviae (strain ATCC VR-813 / DSM 19441 / 03DC25 / GPIC) (Chlamydophila caviae).